Here is a 71-residue protein sequence, read N- to C-terminus: Exodeoxyribonuclease 7 small subunit (71 aa).

Belongs to the XseB family. In terms of assembly, heterooligomer composed of large and small subunits.

Its subcellular location is the cytoplasm. It catalyses the reaction Exonucleolytic cleavage in either 5'- to 3'- or 3'- to 5'-direction to yield nucleoside 5'-phosphates.. In terms of biological role, bidirectionally degrades single-stranded DNA into large acid-insoluble oligonucleotides, which are then degraded further into small acid-soluble oligonucleotides. The sequence is that of Exodeoxyribonuclease 7 small subunit from Streptococcus equi subsp. equi (strain 4047).